Here is a 440-residue protein sequence, read N- to C-terminus: Ribosomal protein uS12 methylthiotransferase RimO (440 aa).

The MTTase N-terminal domain occupies 8 to 118; that stretch reads PTVGFVSLGC…VMGIVHTHLP (111 aa). [4Fe-4S] cluster-binding residues include Cys-17, Cys-53, Cys-82, Cys-149, Cys-153, and Cys-156. The region spanning 135–372 is the Radical SAM core domain; that stretch reads LTPDHFAYLK…MQVQEDISAD (238 aa). A TRAM domain is found at 375–440; it reads AAKIDTVIQV…DHHDLYAQVV (66 aa).

The protein belongs to the methylthiotransferase family. RimO subfamily. It depends on [4Fe-4S] cluster as a cofactor.

Its subcellular location is the cytoplasm. It catalyses the reaction L-aspartate(89)-[ribosomal protein uS12]-hydrogen + (sulfur carrier)-SH + AH2 + 2 S-adenosyl-L-methionine = 3-methylsulfanyl-L-aspartate(89)-[ribosomal protein uS12]-hydrogen + (sulfur carrier)-H + 5'-deoxyadenosine + L-methionine + A + S-adenosyl-L-homocysteine + 2 H(+). Catalyzes the methylthiolation of an aspartic acid residue of ribosomal protein uS12. The sequence is that of Ribosomal protein uS12 methylthiotransferase RimO from Dechloromonas aromatica (strain RCB).